A 256-amino-acid chain; its full sequence is uncharacterized protein (256 aa).

This sequence belongs to the methyltransferase superfamily.

Its subcellular location is the cytoplasm. The protein resides in the nucleus. Probable methyltransferase. This is an uncharacterized protein from Schizosaccharomyces pombe (strain 972 / ATCC 24843) (Fission yeast).